Here is a 411-residue protein sequence, read N- to C-terminus: LL-diaminopimelate aminotransferase 1 (411 aa).

Substrate-binding residues include tyrosine 15 and glycine 42. Residues tyrosine 72, 108–109, tyrosine 132, asparagine 187, tyrosine 218, and 246–248 each bind pyridoxal 5'-phosphate; these read SK and SFS. 3 residues coordinate substrate: lysine 109, tyrosine 132, and asparagine 187. At lysine 249 the chain carries N6-(pyridoxal phosphate)lysine. Pyridoxal 5'-phosphate-binding residues include arginine 257 and asparagine 292. Substrate-binding residues include asparagine 292 and arginine 388.

It belongs to the class-I pyridoxal-phosphate-dependent aminotransferase family. LL-diaminopimelate aminotransferase subfamily. Homodimer. Pyridoxal 5'-phosphate is required as a cofactor.

It catalyses the reaction (2S,6S)-2,6-diaminopimelate + 2-oxoglutarate = (S)-2,3,4,5-tetrahydrodipicolinate + L-glutamate + H2O + H(+). It participates in amino-acid biosynthesis; L-lysine biosynthesis via DAP pathway; LL-2,6-diaminopimelate from (S)-tetrahydrodipicolinate (aminotransferase route): step 1/1. Functionally, involved in the synthesis of meso-diaminopimelate (m-DAP or DL-DAP), required for both lysine and peptidoglycan biosynthesis. Catalyzes the direct conversion of tetrahydrodipicolinate to LL-diaminopimelate. The protein is LL-diaminopimelate aminotransferase 1 of Nostoc sp. (strain PCC 7120 / SAG 25.82 / UTEX 2576).